Here is a 474-residue protein sequence, read N- to C-terminus: PRAME family member 2 (474 aa).

An LRR 1; degenerate repeat occupies 97–124 (RWKLQVLDLRDVDENFWARWPGAWALSC). The LRR 2; degenerate repeat unit spans residues 179–203 (HLCCSKLVNYLTPIKYLRKSLKIIY). One copy of the LRR 3; degenerate repeat lies at 204-230 (INSIGELEIHNTCWPHLIRKLYCYLKE). One copy of the LRR 4; degenerate repeat lies at 231-265 (MKTLCKLVFSRCHHYTSDNELEGWLVTRFTSVFLR). LRR repeat units follow at residues 266-291 (LEHLQLLKIKLITFFSGHLEQLIRCL), 292-323 (QNPLENLELTCGNLLEEDLKCLSQFPSLGYLK), 324-342 (HLNLSYVLLFRISLEPLGA), 348-375 (AASLETLVLEGCQIHYSQLSAILPGLSC), and 376-400 (CSQLTTFYFGSNCMSIDALKDLLRH).

It belongs to the PRAME family.

The chain is PRAME family member 2 from Homo sapiens (Human).